Here is a 228-residue protein sequence, read N- to C-terminus: Lipoprotein-releasing system ATP-binding protein LolD (228 aa).

Positions 9–228 (LEAHDIQKNF…ELINGCLYRR (220 aa)) constitute an ABC transporter domain. 44–51 (GRSGEGKS) contacts ATP.

Belongs to the ABC transporter superfamily. Lipoprotein translocase (TC 3.A.1.125) family. The complex is composed of two ATP-binding proteins (LolD) and two transmembrane proteins (LolC and LolE).

It is found in the cell inner membrane. Its function is as follows. Part of the ABC transporter complex LolCDE involved in the translocation of mature outer membrane-directed lipoproteins, from the inner membrane to the periplasmic chaperone, LolA. Responsible for the formation of the LolA-lipoprotein complex in an ATP-dependent manner. This chain is Lipoprotein-releasing system ATP-binding protein LolD, found in Protochlamydia amoebophila (strain UWE25).